Here is a 58-residue protein sequence, read N- to C-terminus: Small ribosomal subunit protein bS21 (58 aa).

This sequence belongs to the bacterial ribosomal protein bS21 family.

In Lacticaseibacillus paracasei (strain ATCC 334 / BCRC 17002 / CCUG 31169 / CIP 107868 / KCTC 3260 / NRRL B-441) (Lactobacillus paracasei), this protein is Small ribosomal subunit protein bS21.